We begin with the raw amino-acid sequence, 131 residues long: uncharacterized protein (131 aa).

This is an uncharacterized protein from Escherichia coli.